The chain runs to 249 residues: LexA repressor (249 aa).

The interval 1–26 is disordered; it reads MAAQATGGRATQRSQQSPAKPKGLTV. Positions 9–18 are enriched in polar residues; it reads RATQRSQQSP. The H-T-H motif DNA-binding region spans 48–68; that stretch reads MREIGDTVGLASLSSVTHQLS. Catalysis depends on for autocatalytic cleavage activity residues S173 and K210.

It belongs to the peptidase S24 family. Homodimer.

The catalysed reaction is Hydrolysis of Ala-|-Gly bond in repressor LexA.. In terms of biological role, represses a number of genes involved in the response to DNA damage (SOS response), including recA and lexA. In the presence of single-stranded DNA, RecA interacts with LexA causing an autocatalytic cleavage which disrupts the DNA-binding part of LexA, leading to derepression of the SOS regulon and eventually DNA repair. The polypeptide is LexA repressor (Arthrobacter sp. (strain FB24)).